We begin with the raw amino-acid sequence, 224 residues long: IMKVTQDGSIPQIASNINNWLNTHNPDVVFLWIGGNDLLLSGNVNATGLSNLIDQIFTVKPNVTLFVADYYPWPEAVKQYNAVIPGIVQQKANAGKKVYFVKLSEIQFDRNTDISWDGLHLSEIGYTKIANIWYKYTIDILKALAGQTQPTPSPSPTPTDSPLVKKGDVNLDGQVNSTDFSLLKRYILKVVDINSINVTNADMNNDGNINSTDISILKRILLRN.

Residues 147-168 (QTQPTPSPSPTPTDSPLVKKGD) form a disordered region. Residues 162-224 (PLVKKGDVNL…SILKRILLRN (63 aa)) form the Dockerin domain.

The enzyme catalyses Endohydrolysis of (1-&gt;4)-beta-D-glucosidic linkages in cellulose, lichenin and cereal beta-D-glucans.. This enzyme catalyzes the endohydrolysis of 1,4-beta-glucosidic linkages in cellulose, lichenin and cereal beta-D-glucans. The polypeptide is Putative endoglucanase X (celX) (Acetivibrio thermocellus (Hungateiclostridium thermocellum)).